The following is a 471-amino-acid chain: 5-hydroxytryptamine receptor 2A (471 aa).

Over 1 to 80 the chain is Extracellular; the sequence is MEILCEDNIS…LQEKNWSALL (80 aa). N-linked (GlcNAc...) asparagine glycosylation is found at N8, N38, N44, N51, and N54. The chain crosses the membrane as a helical span at residues 81-97; the sequence is TTVVIILTIAGNILVIM. Over 98–111 the chain is Cytoplasmic; it reads AVSLEKKLQNATNY. Residues 112 to 137 traverse the membrane as a helical segment; the sequence is FLMSLAIADMLLGFLVMPVSMLTILY. Topologically, residues 138 to 146 are extracellular; that stretch reads GYRWPLPSK. Residues 147–171 form a helical membrane-spanning segment; that stretch reads LCAVWIYLDVLFSTASIMHLCAISL. The cysteines at positions 148 and 227 are disulfide-linked. D155 serves as a coordination point for serotonin. The DRY motif; important for ligand-induced conformation changes signature appears at 172–174; it reads DRY. At 172-191 the chain is on the cytoplasmic side; it reads DRYVAIQNPIHHSRFNSRTK. Residues 192–215 form a helical membrane-spanning segment; sequence AFLKIIAVWTISVGISMPIPVFGL. Over 216–232 the chain is Extracellular; it reads QDDSKVFKEGSCLLADD. A helical membrane pass occupies residues 233-258; it reads NFVLIGSFVAFFIPLTIMVITYFLTI. Residues 259–322 lie on the Cytoplasmic side of the membrane; sequence KSLQKEATLC…QSISNEQKAC (64 aa). The residue at position 280 (S280) is a Phosphoserine. The helical transmembrane segment at 323–348 threads the bilayer; that stretch reads KVLGIVFFLFVVMWCPFFITNIMAVI. N343 provides a ligand contact to serotonin. A disulfide bridge connects residues C349 and C353. The Extracellular portion of the chain corresponds to 349–356; it reads CKESCNEN. The chain crosses the membrane as a helical span at residues 357-382; it reads VIGALLNVFVWIGYLSSAVNPLVYTL. Residues 376 to 380 carry the NPxxY motif; important for ligand-induced conformation changes and signaling motif; sequence NPLVY. Over 383–471 the chain is Cytoplasmic; it reads FNKTYRSAFS…ETVNEKVSCV (89 aa). A PDZ-binding motif is present at residues 469–471; sequence SCV.

Belongs to the G-protein coupled receptor 1 family. Interacts (via C-terminus) with MPDZ and PATJ. May interact (via C-terminus) with MPP3, PRDX6, DLG4, DLG1, CASK, APBA1 and MAGI2. Interacts with GRM2 and DRD2; this may affect signaling. As to expression, detected in neurons in brain cortex. Detected in adult intestine, especially in mucosal epithelium, longitudinal and circular layers of muscularis externa and myenteric plexuses. Highly expressed in Paneth cells, and detected at lower levels in enterocytes (at protein level). Detected in neurons in the brain cortex.

The protein localises to the cell membrane. Its subcellular location is the cell projection. It is found in the dendrite. It localises to the axon. The protein resides in the cytoplasmic vesicle. The protein localises to the membrane. Its subcellular location is the caveola. It is found in the presynapse. G-protein coupled receptor activity is regulated by lipids: oleamide increases HTR2A-mediated activity. Functionally, G-protein coupled receptor for 5-hydroxytryptamine (serotonin). Also functions as a receptor for various drugs and psychoactive substances, including mescaline, psilocybin, 1-(2,5-dimethoxy-4-iodophenyl)-2-aminopropane (DOI) and lysergic acid diethylamide (LSD). Ligand binding causes a conformation change that triggers signaling via guanine nucleotide-binding proteins (G proteins) and modulates the activity of downstream effectors. HTR2A is coupled to G(q)/G(11) G alpha proteins and activates phospholipase C-beta, releasing diacylglycerol (DAG) and inositol 1,4,5-trisphosphate (IP3) second messengers that modulate the activity of phosphatidylinositol 3-kinase and promote the release of Ca(2+) ions from intracellular stores, respectively. Beta-arrestin family members inhibit signaling via G proteins and mediate activation of alternative signaling pathways. Affects neural activity, perception, cognition and mood. Plays a role in the regulation of behavior, including responses to anxiogenic situations and psychoactive substances. Plays a role in intestinal smooth muscle contraction, and may play a role in arterial vasoconstriction. This chain is 5-hydroxytryptamine receptor 2A (Htr2a), found in Mus musculus (Mouse).